We begin with the raw amino-acid sequence, 466 residues long: Adenosylhomocysteinase (466 aa).

Residues T57, D132, and E192 each contribute to the substrate site. Position 193–195 (193–195 (TTT)) interacts with NAD(+). Substrate contacts are provided by K222 and D226. NAD(+)-binding positions include N227, 256–261 (GYGDVG), E279, N314, 335–337 (IGH), and N380.

Belongs to the adenosylhomocysteinase family. It depends on NAD(+) as a cofactor.

It is found in the cytoplasm. It carries out the reaction S-adenosyl-L-homocysteine + H2O = L-homocysteine + adenosine. It functions in the pathway amino-acid biosynthesis; L-homocysteine biosynthesis; L-homocysteine from S-adenosyl-L-homocysteine: step 1/1. Its function is as follows. May play a key role in the regulation of the intracellular concentration of adenosylhomocysteine. In Brucella anthropi (strain ATCC 49188 / DSM 6882 / CCUG 24695 / JCM 21032 / LMG 3331 / NBRC 15819 / NCTC 12168 / Alc 37) (Ochrobactrum anthropi), this protein is Adenosylhomocysteinase.